Consider the following 398-residue polypeptide: Serpin-Z1C (398 aa).

Positions 343–367 (GTEAAASTAIKMALLQARPPSVMDF) are RCL.

The protein belongs to the serpin family.

Its function is as follows. Inhibits chymotrypsin and cathepsin G in vitro. This is Serpin-Z1C from Triticum aestivum (Wheat).